The chain runs to 121 residues: Ribosome-binding factor A (121 aa).

This sequence belongs to the RbfA family. In terms of assembly, monomer. Binds 30S ribosomal subunits, but not 50S ribosomal subunits or 70S ribosomes.

It is found in the cytoplasm. Its function is as follows. One of several proteins that assist in the late maturation steps of the functional core of the 30S ribosomal subunit. Associates with free 30S ribosomal subunits (but not with 30S subunits that are part of 70S ribosomes or polysomes). Required for efficient processing of 16S rRNA. May interact with the 5'-terminal helix region of 16S rRNA. In Clostridium novyi (strain NT), this protein is Ribosome-binding factor A.